A 260-amino-acid polypeptide reads, in one-letter code: MSRNKVEICGVDTSKLPVLKNEEMRKLFRQLQDEGDDSAREKLVNGNLRLVLSVIQRFNNRGEYVDDLFQVGCIGLMKSIDNFDLSHNVKFSTYAVPMIIGEIRRYLRDNNPIRVSRSLRDIAYKALQVRERLISETSKEPTAEDIAKVLEVPHEEIVFALDAIQDPVSLFEPIYNDGGDPIYVMDQISDERNTDSQWIEELALKEGMRRLNDREKMILRKRFFQGKTQMEVAEEIGISQAQVSRLEKAAIKQMNKNIHQ.

Positions 1 to 71 (MSRNKVEICG…GEYVDDLFQV (71 aa)) are recognizes anti-sigma-G factor Gin (csfB). Residues 67 to 80 (DLFQVGCIGLMKSI) carry the Polymerase core binding motif. The segment at residues 229–248 (QMEVAEEIGISQAQVSRLEK) is a DNA-binding region (H-T-H motif).

The protein belongs to the sigma-70 factor family. In terms of assembly, interacts with anti-sigma-G factor Gin (csfB).

Its activity is regulated as follows. Activity repressed by anti-sigma-G factor Gin (csfB) and Lon protease during the early stages of forespore development. When both Gin and sigma-G are expressed in E.coli Gin inhibits sigma-G activity, strongly suggesting Gin inhibits by direct physical interaction. Functionally, sigma factors are initiation factors that promote the attachment of RNA polymerase to specific initiation sites and are then released. This sigma factor is responsible for the expression of sporulation specific genes in the forespore. The protein is RNA polymerase sigma-G factor (sigG) of Bacillus subtilis (strain 168).